The sequence spans 279 residues: Eukaryotic translation initiation factor 3 subunit J (279 aa).

Disordered regions lie at residues M1–S74 and E229–M279. The span at W20–E39 shows a compositional bias: acidic residues. The stretch at D34 to S74 forms a coiled coil. A compositionally biased stretch (basic and acidic residues) spans V40–N67. Positions D268 to M279 are enriched in acidic residues.

This sequence belongs to the eIF-3 subunit J family. As to quaternary structure, component of the eukaryotic translation initiation factor 3 (eIF-3) complex.

The protein localises to the cytoplasm. Its function is as follows. Component of the eukaryotic translation initiation factor 3 (eIF-3) complex, which is involved in protein synthesis of a specialized repertoire of mRNAs and, together with other initiation factors, stimulates binding of mRNA and methionyl-tRNAi to the 40S ribosome. The eIF-3 complex specifically targets and initiates translation of a subset of mRNAs involved in cell proliferation. The polypeptide is Eukaryotic translation initiation factor 3 subunit J (Meyerozyma guilliermondii (strain ATCC 6260 / CBS 566 / DSM 6381 / JCM 1539 / NBRC 10279 / NRRL Y-324) (Yeast)).